A 356-amino-acid chain; its full sequence is Testis-expressed protein 19.1 (356 aa).

The segment at 1 to 78 (MCPPVSVRHG…WDAEPMEHLS (78 aa)) is interaction with LIRE1. A compositionally biased stretch (acidic residues) spans 59–72 (LSEEEEEEEVWDAE). The disordered stretch occupies residues 59 to 107 (LSEEEEEEEVWDAEPMEHLSESESLESDSKQDAGSEQDAGSEPNTRSEQ). A compositionally biased stretch (basic and acidic residues) spans 73–91 (PMEHLSESESLESDSKQDA). The interval 139–186 (QWVVFSISVPTELLPQEAVPLDLGPEDVEWTQALPWRLDVLFPCSHRL) is important for interaction with piRNA.

In terms of assembly, interacts with UBR2; does not lead to Tex19.1 degradation and stabilizes it. Interacts with piRNA-associated proteins DDX4, EDC4, MAEL, PIWIL1, PIWIL2, RANBP9 and TDRD6. Interacts with L1RE1.

It is found in the cytoplasm. In terms of biological role, required during spermatogenesis and placenta development, participating in the repression of retrotransposable elements and prevent their mobilization. Collaborates with the Piwi-interacting RNA (piRNA) pathway, which mediates the repression of transposable elements during meiosis by forming complexes composed of piRNAs and Piwi proteins. Interacts with Piwi proteins and directly binds piRNAs, a class of 24 to 30 nucleotide RNAs that are generated by a Dicer-independent mechanism and are primarily derived from transposons and other repeated sequence elements. Also during spermatogenesis, promotes, with UBR2, SPO11-dependent recombination foci to accumulate and drive robust homologous chromosome synapsis. Interacts with LINE-1 retrotransposon encoded LIRE1, stimulates LIRE1 polyubiquitination, mediated by UBR2, and degradation, inhibiting LINE-1 retrotransposon mobilization. The protein is Testis-expressed protein 19.1 (Tex19.1) of Rattus norvegicus (Rat).